Consider the following 968-residue polypeptide: RNA polymerase-associated protein RapA (968 aa).

The Helicase ATP-binding domain occupies 164 to 334 (DVGRRHAPRV…FARLRLLDPD (171 aa)). ATP is bound at residue 177–184 (DEVGLGKT). Positions 280-283 (DEAH) match the DEAH box motif. The Helicase C-terminal domain maps to 490–643 (RVEWLMGYLT…HTCPTGRAVY (154 aa)).

This sequence belongs to the SNF2/RAD54 helicase family. RapA subfamily. As to quaternary structure, interacts with the RNAP. Has a higher affinity for the core RNAP than for the holoenzyme. Its ATPase activity is stimulated by binding to RNAP.

Functionally, transcription regulator that activates transcription by stimulating RNA polymerase (RNAP) recycling in case of stress conditions such as supercoiled DNA or high salt concentrations. Probably acts by releasing the RNAP, when it is trapped or immobilized on tightly supercoiled DNA. Does not activate transcription on linear DNA. Probably not involved in DNA repair. In Erwinia tasmaniensis (strain DSM 17950 / CFBP 7177 / CIP 109463 / NCPPB 4357 / Et1/99), this protein is RNA polymerase-associated protein RapA.